Consider the following 603-residue polypeptide: Probable methyltransferase PMT4 (603 aa).

Over 1–12 (MKVASVIGLRPR) the chain is Cytoplasmic. Residues 13–33 (ISGLLFLTLGVIALITILVPN) form a helical; Signal-anchor for type II membrane protein membrane-spanning segment. Over 34–603 (SDSSSTTSTT…LVCQKPLLKK (570 aa)) the chain is Lumenal. N-linked (GlcNAc...) asparagine glycans are attached at residues Asn-96 and Asn-393.

The protein belongs to the methyltransferase superfamily.

The protein resides in the endoplasmic reticulum membrane. The chain is Probable methyltransferase PMT4 from Arabidopsis thaliana (Mouse-ear cress).